The sequence spans 172 residues: Ribosome maturation factor RimM (172 aa).

One can recognise a PRC barrel domain in the interval 96–168; the sequence is DGEFYYHEII…RIEVELMEGL (73 aa).

Belongs to the RimM family. Binds ribosomal protein uS19.

It localises to the cytoplasm. In terms of biological role, an accessory protein needed during the final step in the assembly of 30S ribosomal subunit, possibly for assembly of the head region. Essential for efficient processing of 16S rRNA. May be needed both before and after RbfA during the maturation of 16S rRNA. It has affinity for free ribosomal 30S subunits but not for 70S ribosomes. This chain is Ribosome maturation factor RimM, found in Streptococcus thermophilus (strain CNRZ 1066).